The chain runs to 354 residues: Adenine deaminase (354 aa).

Zn(2+) contacts are provided by histidine 19, histidine 21, and histidine 211. The active-site Proton donor is the glutamate 214. Aspartate 291 provides a ligand contact to Zn(2+). Residue aspartate 292 participates in substrate binding.

Belongs to the metallo-dependent hydrolases superfamily. Adenosine and AMP deaminases family. Adenine deaminase type 2 subfamily. Requires Zn(2+) as cofactor.

It localises to the cytoplasm. Its subcellular location is the nucleus. It carries out the reaction adenine + H2O + H(+) = hypoxanthine + NH4(+). Catalyzes the hydrolytic deamination of adenine to hypoxanthine. Plays an important role in the purine salvage pathway and in nitrogen catabolism. This is Adenine deaminase (aah1) from Aspergillus fumigatus (strain ATCC MYA-4609 / CBS 101355 / FGSC A1100 / Af293) (Neosartorya fumigata).